The primary structure comprises 325 residues: uncharacterized protein (325 aa).

Composition is skewed to polar residues over residues 1-21 and 29-57; these read MSYQ…SSSA and EPFS…SSRA. Positions 1–325 are disordered; it reads MSYQQRANDS…LKTGHHSERY (325 aa). A compositionally biased stretch (basic and acidic residues) spans 86–109; it reads ESRKKEQSDVRGGDTSYSRRHDDS. Polar residues-rich tracts occupy residues 114–167 and 174–193; these read NKYS…TTQG and YSQS…TPSD. Low complexity-rich tracts occupy residues 200–210 and 252–278; these read YDYSSSGSHTH and ATDT…QRNA. Over residues 282 to 325 the composition is skewed to basic and acidic residues; sequence EDEHVSMGDKMKGNMEKMAGKLTRDPELVQKGEDLKTGHHSERY.

This is an uncharacterized protein from Schizosaccharomyces pombe (strain 972 / ATCC 24843) (Fission yeast).